Consider the following 543-residue polypeptide: MAQQEAEILRPLANFSPSLWGDQFIKNDSDAKVRYIFHYVDYTNLSMLTATGTKMVDTMNLIDTLERLGVSYHFEHEIEEILQQFFNLNTDYNDEAYDLYTVATHFRLFRQHGHRITCADIFGRWRDENGKFHEGLKDDAKGLLSLYEASYLRTRGETILDEALDFTTASLKSIAPNLESPLRRQVEHALVQQLHWGNPRIEARNFISLYEEYEDKDESLLRFAKLDYNLLQMMHKEELHEVSRWWKELDLVAKLPYARDRVVECFFWAMGVYHEPQYSRARVMLTKTIAMTSIIDDTYDAYGTIEELDIFTEAIERWNVEEMKRLPEYIKPFYKALLELYEQFEEELAKEGRSYATHYAIESLKELVRSYHVEAKWFIQGYLPPFEEYLKNALITCTYCYHTTTSLLGVESAVREDFEWLSKKPKMLVAGLLICRVIDDIATYEVEKDRGQIATGIESYMRDNGATKEEAITKFFEIANDAWKDINEECMRPSPHSRDVLMRILNLERIIDVTYKGNEDGYTQPEKVLKPHIIALFVDPIQI.

Mg(2+) contacts are provided by D296, D300, D439, and E447. The DDXXD motif motif lies at 296-300; sequence DDTYD.

It belongs to the terpene synthase family. Tpsa subfamily. The cofactor is Mg(2+). It depends on Mn(2+) as a cofactor. As to expression, barely detectable in leaves.

It localises to the plastid. It is found in the chloroplast. It carries out the reaction (2E,6E)-farnesyl diphosphate = germacrene A + diphosphate. It catalyses the reaction (2E,6E)-farnesyl diphosphate = (1S,2S,4R)-beta-elemene + diphosphate. The protein operates within secondary metabolite biosynthesis; terpenoid biosynthesis. In terms of biological role, sesquiterpene synthase involved in the biosynthesis of volatile compounds widely used in aromatherapy and folk medicine, and present in culinary herbs. Mediates the conversion of (2E,6E)-farnesyl diphosphate (FPP) into germacrene A and beta-elemene. Not able to use (2E)-geranyl diphosphate (GPP) as substrate. This is Germacrene A synthase from Lavandula viridis (Green lavender).